Reading from the N-terminus, the 312-residue chain is Nucleosome assembly protein 1-like 4 (312 aa).

The stretch at 24–78 (VETLKNKLQALAEQHVDVLESLAPSVRKRVDVLMEIQSQHDELEVKFFEEKAALE) forms a coiled coil. Positions 45–60 (LAPSVRKRVDVLMEIQ) match the Nuclear export signal motif. Residues 289 to 312 (DYGASWVDDEEEDDNNDEYSDEEA) are disordered.

This sequence belongs to the nucleosome assembly protein (NAP) family.

Its subcellular location is the nucleus. It is found in the cytoplasm. Functionally, may modulate chromatin structure by regulation of nucleosome assembly/disassembly. The protein is Nucleosome assembly protein 1-like 4 of Oryza sativa subsp. japonica (Rice).